A 177-amino-acid chain; its full sequence is MGTAKEKKQQIVAEFKDKLSQAQTVIFSNFSGLTVEDDTILRRKFREANSEYKVYKNTLMTIAAKELGYGDDLIKYFEGPTSVAFGYDDPVAPAKVLVEFMKDHKGIELKAGLVNGKLVTVEEIKALAELPSREELVAKALGSMKAPITNLVFVLSGTLRSLLYALNAVKEKKQAEA.

This sequence belongs to the universal ribosomal protein uL10 family. Part of the ribosomal stalk of the 50S ribosomal subunit. The N-terminus interacts with L11 and the large rRNA to form the base of the stalk. The C-terminus forms an elongated spine to which L12 dimers bind in a sequential fashion forming a multimeric L10(L12)X complex.

Its function is as follows. Forms part of the ribosomal stalk, playing a central role in the interaction of the ribosome with GTP-bound translation factors. This Thermoanaerobacter pseudethanolicus (strain ATCC 33223 / 39E) (Clostridium thermohydrosulfuricum) protein is Large ribosomal subunit protein uL10.